We begin with the raw amino-acid sequence, 809 residues long: Phenylalanine--tRNA ligase beta subunit (809 aa).

The tRNA-binding domain occupies 39-152 (KDKWPNVYVG…ADALVGMLAS (114 aa)). In terms of domain architecture, B5 spans 404 to 492 (KERNGIVLSL…RIAGYHTIPC (89 aa)). Mg(2+)-binding residues include D470, D476, E479, and E480. The FDX-ACB domain maps to 717-808 (NRFPAVERDL…LNTETGAVLR (92 aa)).

Belongs to the phenylalanyl-tRNA synthetase beta subunit family. Type 1 subfamily. As to quaternary structure, tetramer of two alpha and two beta subunits. Mg(2+) is required as a cofactor.

It localises to the cytoplasm. It carries out the reaction tRNA(Phe) + L-phenylalanine + ATP = L-phenylalanyl-tRNA(Phe) + AMP + diphosphate + H(+). This Dehalococcoides mccartyi (strain CBDB1) protein is Phenylalanine--tRNA ligase beta subunit.